A 393-amino-acid polypeptide reads, in one-letter code: Chorismate synthase (393 aa).

Residues arginine 40 and arginine 46 each coordinate NADP(+). FMN is bound by residues 129–131 (RAS), 250–251 (QA), glycine 301, 316–320 (KPIST), and arginine 342.

Belongs to the chorismate synthase family. Homotetramer. It depends on FMNH2 as a cofactor.

It catalyses the reaction 5-O-(1-carboxyvinyl)-3-phosphoshikimate = chorismate + phosphate. The protein operates within metabolic intermediate biosynthesis; chorismate biosynthesis; chorismate from D-erythrose 4-phosphate and phosphoenolpyruvate: step 7/7. Catalyzes the anti-1,4-elimination of the C-3 phosphate and the C-6 proR hydrogen from 5-enolpyruvylshikimate-3-phosphate (EPSP) to yield chorismate, which is the branch point compound that serves as the starting substrate for the three terminal pathways of aromatic amino acid biosynthesis. This reaction introduces a second double bond into the aromatic ring system. This chain is Chorismate synthase, found in Acidobacterium capsulatum (strain ATCC 51196 / DSM 11244 / BCRC 80197 / JCM 7670 / NBRC 15755 / NCIMB 13165 / 161).